A 534-amino-acid polypeptide reads, in one-letter code: Membrane-bound lytic murein transglycosylase F (534 aa).

Residues 1-24 form the signal peptide; the sequence is MQISQFNRLKRSALLFASVLLLSA. The segment at 25-285 is non-LT domain; it reads CQIESEPKSE…TLEEKYIGHI (261 aa). Residues 287–534 are LT domain; it reads AFDYVDTRAF…AEQTPVPKAE (248 aa). Glu-330 is a catalytic residue. Residues 507–534 are disordered; the sequence is VSGAVEVTPPPEENAPQEAEQTPVPKAE. Residues 520-534 show a composition bias toward low complexity; sequence NAPQEAEQTPVPKAE.

This sequence in the N-terminal section; belongs to the bacterial solute-binding protein 3 family. In the C-terminal section; belongs to the transglycosylase Slt family.

The protein localises to the cell outer membrane. It catalyses the reaction Exolytic cleavage of the (1-&gt;4)-beta-glycosidic linkage between N-acetylmuramic acid (MurNAc) and N-acetylglucosamine (GlcNAc) residues in peptidoglycan, from either the reducing or the non-reducing ends of the peptidoglycan chains, with concomitant formation of a 1,6-anhydrobond in the MurNAc residue.. Functionally, murein-degrading enzyme that degrades murein glycan strands and insoluble, high-molecular weight murein sacculi, with the concomitant formation of a 1,6-anhydromuramoyl product. Lytic transglycosylases (LTs) play an integral role in the metabolism of the peptidoglycan (PG) sacculus. Their lytic action creates space within the PG sacculus to allow for its expansion as well as for the insertion of various structures such as secretion systems and flagella. In Vibrio campbellii (strain ATCC BAA-1116), this protein is Membrane-bound lytic murein transglycosylase F.